The following is a 1157-amino-acid chain: Endo-1,4-beta-xylanase A (1157 aa).

An N-terminal signal peptide occupies residues 1–33; that stretch reads MMKNNVDRIVSIVTALIMIFGASLFSPPIRVFA. CBM-cenC domains are found at residues 38–189 and 195–343; these read INLV…VTTQ and GNVI…VIGE. A GH10 domain is found at 352 to 675; that stretch reads QNDIPDLYSV…KPAFWAVVDP (324 aa). The active-site Proton donor is Glu495. Asp537 is a catalytic residue. Residue Glu600 is the Nucleophile of the active site. SLH domains are found at residues 1051–1114 and 1115–1157; these read KKGV…YSGE and FSDV…EMTQ.

This sequence belongs to the glycosyl hydrolase 10 (cellulase F) family.

The catalysed reaction is Endohydrolysis of (1-&gt;4)-beta-D-xylosidic linkages in xylans.. The protein operates within glycan degradation; xylan degradation. Functionally, endo-acting enzyme that randomly cleaves the internal xylosidic linkages of the xylan backbone, yielding xylooligosaccharides of various lengths which are further hydrolyzed to xylose molecules by beta-xylosidase (EC 3.2.1.37). Requires at least three xylose residues for catalytic activity. Does not have activity against xylobiose. This is Endo-1,4-beta-xylanase A (xynA) from Thermoanaerobacterium saccharolyticum.